The sequence spans 133 residues: Secretin (133 aa).

Positions 1 to 22 (MEPPLPTPMLLLLLLLLSSSAA) are cleaved as a signal peptide. The propeptide occupies 23-30 (LPAPPRTP). Residue V58 is modified to Valine amide. At S62 the chain carries Phosphoserine. A propeptide spanning residues 62–133 (SEQDTENIPE…EWTETTRPPR (72 aa)) is cleaved from the precursor.

It belongs to the glucagon family. Highly expressed in the intestine. Also expressed in the hippocampus, cerebellum and the brain stem in adult mouse brain. In the hippocampus, expressed in the dentate gyrus, the hilus and the molecular layer.

The protein resides in the secreted. Functionally, hormone involved in different processes, such as regulation of the pH of the duodenal content, food intake and water homeostasis. Exerts its biological effects by binding to secretin receptor (SCTR), a G-protein coupled receptor expressed in the basolateral domain of several cells. Acts as a key gastrointestinal hormone by regulating the pH of the duodenal content. Secreted by S cells of the duodenum in the crypts of Lieberkuehn and regulates the pH of the duodenum by (1) inhibiting the secretion of gastric acid from the parietal cells of the stomach and (2) stimulating the production of bicarbonate (NaHCO(3)) from the ductal cells of the pancreas. Production of bicarbonate is essential to neutralize the pH and ensure no damage is done to the small intestine by the gastric acid. In addition to regulating the pH of the duodenal content, plays a central role in diet induced thermogenesis: acts as a non-sympathetic brown fat (BAT) activator mediating prandial thermogenesis, which consequentially induces satiation. Mechanistically, secretin released by the gut after a meal binds to secretin receptor (SCTR) in brown adipocytes, activating brown fat thermogenesis by stimulating lipolysis, which is sensed in the brain and promotes satiation. Also able to stimulate lipolysis in white adipocytes. Also plays an important role in cellular osmoregulation: released into the systemic circulation in response to hyperosmolality and acts at different levels in the hypothalamus, pituitary and kidney to regulate water homeostasis. Also plays a role in the central nervous system, possibly by acting as a neuropeptide hormone: required for hippocampal synaptic function and neural progenitor cells maintenance. In Mus musculus (Mouse), this protein is Secretin.